The sequence spans 140 residues: RxLR effector protein CRE2 (140 aa).

Positions 1 to 24 (MRWLIWTAVSTLVMLLAMTEVSAS) are cleaved as a signal peptide. Positions 56–72 (RSLRDKSSSLITESEER) match the RxLR-dEER motif.

It belongs to the RxLR effector family.

The protein resides in the secreted. The protein localises to the host cell. Functionally, effector that is involved in host plant infection. Contributes to virulence during the early infection stage, by inhibiting plant defense responses induced by both PAMP-triggered immunity (PTI) and effector-triggered immunity (ETI). The chain is RxLR effector protein CRE2 from Phytophthora infestans (strain T30-4) (Potato late blight agent).